The following is a 235-amino-acid chain: 5'-methylthioadenosine/S-adenosylhomocysteine nucleosidase (235 aa).

Glu12 functions as the Proton acceptor in the catalytic mechanism. Residues Gly78, Met153, and 174 to 175 (ME) contribute to the substrate site. The active-site Proton donor is the Asp198.

This sequence belongs to the PNP/UDP phosphorylase family. MtnN subfamily.

It carries out the reaction S-adenosyl-L-homocysteine + H2O = S-(5-deoxy-D-ribos-5-yl)-L-homocysteine + adenine. The enzyme catalyses S-methyl-5'-thioadenosine + H2O = 5-(methylsulfanyl)-D-ribose + adenine. It catalyses the reaction 5'-deoxyadenosine + H2O = 5-deoxy-D-ribose + adenine. Its pathway is amino-acid biosynthesis; L-methionine biosynthesis via salvage pathway; S-methyl-5-thio-alpha-D-ribose 1-phosphate from S-methyl-5'-thioadenosine (hydrolase route): step 1/2. Its function is as follows. Catalyzes the irreversible cleavage of the glycosidic bond in both 5'-methylthioadenosine (MTA) and S-adenosylhomocysteine (SAH/AdoHcy) to adenine and the corresponding thioribose, 5'-methylthioribose and S-ribosylhomocysteine, respectively. Also cleaves 5'-deoxyadenosine, a toxic by-product of radical S-adenosylmethionine (SAM) enzymes, into 5-deoxyribose and adenine. The chain is 5'-methylthioadenosine/S-adenosylhomocysteine nucleosidase from Geobacillus kaustophilus (strain HTA426).